The chain runs to 245 residues: 23S rRNA (guanosine-2'-O-)-methyltransferase RlmB (245 aa).

S-adenosyl-L-methionine is bound by residues Gly197, Ile217, and Leu226.

Belongs to the class IV-like SAM-binding methyltransferase superfamily. RNA methyltransferase TrmH family. RlmB subfamily.

It localises to the cytoplasm. It carries out the reaction guanosine(2251) in 23S rRNA + S-adenosyl-L-methionine = 2'-O-methylguanosine(2251) in 23S rRNA + S-adenosyl-L-homocysteine + H(+). Its function is as follows. Specifically methylates the ribose of guanosine 2251 in 23S rRNA. This is 23S rRNA (guanosine-2'-O-)-methyltransferase RlmB from Bordetella parapertussis (strain 12822 / ATCC BAA-587 / NCTC 13253).